The following is a 261-amino-acid chain: Carbonic anhydrase 1 (261 aa).

Alanine 2 carries the post-translational modification N-acetylalanine. In terms of domain architecture, Alpha-carbonic anhydrase spans 4–261 (SDWGYDSPNG…LKGRTVRAFF (258 aa)). Histidine 65 (proton donor/acceptor) is an active-site residue. Positions 95, 97, and 120 each coordinate Zn(2+). Substrate is bound by residues threonine 200 and 200–201 (TH).

This sequence belongs to the alpha-carbonic anhydrase family. The cofactor is Zn(2+).

Its subcellular location is the cytoplasm. The enzyme catalyses hydrogencarbonate + H(+) = CO2 + H2O. The catalysed reaction is urea = cyanamide + H2O. With respect to regulation, inhibited by acetazolamide. Functionally, catalyzes the reversible hydration of carbon dioxide. Can hydrate cyanamide to urea. This Equus caballus (Horse) protein is Carbonic anhydrase 1 (CA1).